A 325-amino-acid polypeptide reads, in one-letter code: Probable flavonol synthase 5 (325 aa).

Residues Met1–Leu21 form a disordered region. Residues Ser10–Leu21 are compositionally biased toward polar residues. Positions Thr180 to Pro280 constitute a Fe2OG dioxygenase domain. 2-oxoglutarate is bound at residue Asn188–Tyr190. Fe cation contacts are provided by His205, Asp207, and His261. Arg271 to Ser273 contributes to the 2-oxoglutarate binding site.

The protein belongs to the iron/ascorbate-dependent oxidoreductase family. It depends on Fe(2+) as a cofactor. In terms of tissue distribution, expressed in young seedlings.

It catalyses the reaction a (2R,3R)-dihydroflavonol + 2-oxoglutarate + O2 = a flavonol + succinate + CO2 + H2O. Its pathway is secondary metabolite biosynthesis; flavonoid biosynthesis. This Arabidopsis thaliana (Mouse-ear cress) protein is Probable flavonol synthase 5 (FLS5).